A 98-amino-acid chain; its full sequence is Hainantoxin-XVII (98 aa).

Positions 1-40 (MTTVGVSLFRRSPEKITMKIATFLGLSFLLIASYVLICEA) are cleaved as a signal peptide. The propeptide occupies 41–64 (QHPGFQELLILEENMRDPENSKER). Cystine bridges form between cysteine 66/cysteine 81, cysteine 73/cysteine 85, and cysteine 80/cysteine 95.

The protein belongs to the hainantoxin family. 17 subfamily. As to expression, expressed by the venom gland.

The protein resides in the secreted. In terms of biological role, putative ion channel inhibitor. This Cyriopagopus hainanus (Chinese bird spider) protein is Hainantoxin-XVII.